A 240-amino-acid chain; its full sequence is Sec-independent protein translocase protein TatC (240 aa).

The next 6 membrane-spanning stretches (helical) occupy residues 15-35 (IISIIAFLIGSGIAFYFAKYV), 61-81 (LFILIKISLAVGFIIASPVIL), 103-123 (LLLGSILLFMLGALFAYFIVL), 152-172 (FVLKLVVAFGIAFEMPIVLYV), 191-211 (FIVIAFVIGAIIAPDVSTQVL), and 212-232 (MAIPLLLLYEISIFLGKLATR).

It belongs to the TatC family. Forms a complex with TatA.

Its subcellular location is the cell inner membrane. In terms of biological role, part of the twin-arginine translocation (Tat) system that transports large folded proteins containing a characteristic twin-arginine motif in their signal peptide across membranes. This chain is Sec-independent protein translocase protein TatC, found in Aquifex aeolicus (strain VF5).